Reading from the N-terminus, the 459-residue chain is Phosphomethylpyrimidine synthase (459 aa).

Residues N80, M109, Y139, H175, 195–197 (SRG), 236–239 (DSLR), and E275 contribute to the substrate site. H279 is a binding site for Zn(2+). Y302 is a binding site for substrate. H343 serves as a coordination point for Zn(2+). [4Fe-4S] cluster-binding residues include C423, C426, and C431.

It belongs to the ThiC family. It depends on [4Fe-4S] cluster as a cofactor.

The catalysed reaction is 5-amino-1-(5-phospho-beta-D-ribosyl)imidazole + S-adenosyl-L-methionine = 4-amino-2-methyl-5-(phosphooxymethyl)pyrimidine + CO + 5'-deoxyadenosine + formate + L-methionine + 3 H(+). Its pathway is cofactor biosynthesis; thiamine diphosphate biosynthesis. Catalyzes the synthesis of the hydroxymethylpyrimidine phosphate (HMP-P) moiety of thiamine from aminoimidazole ribotide (AIR) in a radical S-adenosyl-L-methionine (SAM)-dependent reaction. The sequence is that of Phosphomethylpyrimidine synthase from Prochlorococcus marinus (strain MIT 9211).